The primary structure comprises 195 residues: ATP-dependent Clp protease proteolytic subunit (195 aa).

The active-site Nucleophile is the Ser-98. The active site involves His-123.

This sequence belongs to the peptidase S14 family. Fourteen ClpP subunits assemble into 2 heptameric rings which stack back to back to give a disk-like structure with a central cavity, resembling the structure of eukaryotic proteasomes.

Its subcellular location is the cytoplasm. The enzyme catalyses Hydrolysis of proteins to small peptides in the presence of ATP and magnesium. alpha-casein is the usual test substrate. In the absence of ATP, only oligopeptides shorter than five residues are hydrolyzed (such as succinyl-Leu-Tyr-|-NHMec, and Leu-Tyr-Leu-|-Tyr-Trp, in which cleavage of the -Tyr-|-Leu- and -Tyr-|-Trp bonds also occurs).. In terms of biological role, cleaves peptides in various proteins in a process that requires ATP hydrolysis. Has a chymotrypsin-like activity. Plays a major role in the degradation of misfolded proteins. The chain is ATP-dependent Clp protease proteolytic subunit from Staphylococcus haemolyticus (strain JCSC1435).